The primary structure comprises 515 residues: Histidine ammonia-lyase (515 aa).

The segment at residues 148 to 150 (ASG) is a cross-link (5-imidazolinone (Ala-Gly)). The residue at position 149 (S149) is a 2,3-didehydroalanine (Ser).

It belongs to the PAL/histidase family. In terms of processing, contains an active site 4-methylidene-imidazol-5-one (MIO), which is formed autocatalytically by cyclization and dehydration of residues Ala-Ser-Gly.

Its subcellular location is the cytoplasm. The enzyme catalyses L-histidine = trans-urocanate + NH4(+). It participates in amino-acid degradation; L-histidine degradation into L-glutamate; N-formimidoyl-L-glutamate from L-histidine: step 1/3. The protein is Histidine ammonia-lyase of Pseudomonas syringae pv. tomato (strain ATCC BAA-871 / DC3000).